The sequence spans 260 residues: MILNKIKVVVAGFRGKMGSTAVQMILNAPNFELVALLGRKEEVSEAFDVPVFNRKEELENIEADVWLDLTAPEVAYENTYFALEHGLRPVVGTTGFTEDEVARLIKFSREKELGGLIAPNFALGAVLLMQFSKQAVKYFPDVEIIELHHDGKKDAPSGTAVKTAELMAEERLAHHQGAVDEKESLVGARGAVLEGMRIHSVRLPGLVAHQEVIFGSKGEGLTLRHDSYDRSSFMTGIALGIRKVMTVSELKYGLEHFLDL.

NAD(+) contacts are provided by residues 12–17, 92–94, and 118–121; these read GFRGKM, GTT, and APNF. Residue His148 is the Proton donor/acceptor of the active site. Residue His149 coordinates (S)-2,3,4,5-tetrahydrodipicolinate. The Proton donor role is filled by Lys152. Residue 158–159 participates in (S)-2,3,4,5-tetrahydrodipicolinate binding; it reads GT.

Belongs to the DapB family.

It localises to the cytoplasm. It catalyses the reaction (S)-2,3,4,5-tetrahydrodipicolinate + NAD(+) + H2O = (2S,4S)-4-hydroxy-2,3,4,5-tetrahydrodipicolinate + NADH + H(+). It carries out the reaction (S)-2,3,4,5-tetrahydrodipicolinate + NADP(+) + H2O = (2S,4S)-4-hydroxy-2,3,4,5-tetrahydrodipicolinate + NADPH + H(+). The protein operates within amino-acid biosynthesis; L-lysine biosynthesis via DAP pathway; (S)-tetrahydrodipicolinate from L-aspartate: step 4/4. Functionally, catalyzes the conversion of 4-hydroxy-tetrahydrodipicolinate (HTPA) to tetrahydrodipicolinate. The chain is 4-hydroxy-tetrahydrodipicolinate reductase from Lactococcus lactis subsp. cremoris (strain MG1363).